Reading from the N-terminus, the 238-residue chain is Uridylate kinase (238 aa).

12-15 (KLSG) is an ATP binding site. Glycine 54 is a binding site for UMP. The ATP site is built by glycine 55 and arginine 59. UMP is bound by residues aspartate 74 and 135–142 (TGNPYFTT). The ATP site is built by threonine 162, asparagine 163, tyrosine 168, and aspartate 171.

The protein belongs to the UMP kinase family. Homohexamer.

It localises to the cytoplasm. The enzyme catalyses UMP + ATP = UDP + ADP. It participates in pyrimidine metabolism; CTP biosynthesis via de novo pathway; UDP from UMP (UMPK route): step 1/1. Inhibited by UTP. Functionally, catalyzes the reversible phosphorylation of UMP to UDP. This chain is Uridylate kinase, found in Bradyrhizobium sp. (strain BTAi1 / ATCC BAA-1182).